A 219-amino-acid chain; its full sequence is NAD(P)H-quinone oxidoreductase subunit K 2 (219 aa).

Positions 53, 54, 118, and 149 each coordinate [4Fe-4S] cluster.

It belongs to the complex I 20 kDa subunit family. In terms of assembly, NDH-1 can be composed of about 15 different subunits; different subcomplexes with different compositions have been identified which probably have different functions. [4Fe-4S] cluster serves as cofactor.

Its subcellular location is the cellular thylakoid membrane. It carries out the reaction a plastoquinone + NADH + (n+1) H(+)(in) = a plastoquinol + NAD(+) + n H(+)(out). It catalyses the reaction a plastoquinone + NADPH + (n+1) H(+)(in) = a plastoquinol + NADP(+) + n H(+)(out). Functionally, NDH-1 shuttles electrons from an unknown electron donor, via FMN and iron-sulfur (Fe-S) centers, to quinones in the respiratory and/or the photosynthetic chain. The immediate electron acceptor for the enzyme in this species is believed to be plastoquinone. Couples the redox reaction to proton translocation, and thus conserves the redox energy in a proton gradient. Cyanobacterial NDH-1 also plays a role in inorganic carbon-concentration. This is NAD(P)H-quinone oxidoreductase subunit K 2 from Synechocystis sp. (strain ATCC 27184 / PCC 6803 / Kazusa).